The primary structure comprises 357 residues: Sorbitol dehydrogenase (357 aa).

Ala2 is modified (N-acetylalanine). Cys45 serves as a coordination point for Zn(2+). Tyr51 provides a ligand contact to substrate. The Zn(2+) site is built by His70 and Glu71. Position 156 (Glu156) interacts with substrate. Phosphoserine is present on Ser169. Residues Val184, Asp204, Arg209, 273–275, and 297–299 contribute to the NAD(+) site; these read VGM and VFR. Substrate-binding residues include Arg299 and Tyr300.

The protein belongs to the zinc-containing alcohol dehydrogenase family. As to quaternary structure, homotetramer. It depends on Zn(2+) as a cofactor. As to expression, testis has the highest level of expression, followed by kidney, liver, and lung. Low levels of expression are also observed in lens, brain, and skeletal muscle. Expressed in sperm flagellum and very low expression in the sperm head.

The protein localises to the mitochondrion membrane. Its subcellular location is the cell projection. It is found in the cilium. The protein resides in the flagellum. It catalyses the reaction keto-D-fructose + NADH + H(+) = D-sorbitol + NAD(+). The catalysed reaction is xylitol + NAD(+) = D-xylulose + NADH + H(+). The enzyme catalyses L-iditol + NAD(+) = keto-L-sorbose + NADH + H(+). Its activity is regulated as follows. Inhibited in vitro by p-hydroxymercuribenzoate, EDTA, l,l0-phenanthroline and N-ethylmaleimide. Its function is as follows. Polyol dehydrogenase that catalyzes the reversible NAD(+)-dependent oxidation of various sugar alcohols. Is active with D-sorbitol (D-glucitol) leading to the C2-oxidized product D-fructose. Is a key enzyme in the polyol pathway that interconverts glucose and fructose via sorbitol, which constitutes an important alternate route for glucose metabolism. May play a role in sperm motility by using sorbitol as an alternative energy source for sperm motility and protein tyrosine phosphorylation. Has no activity on ethanol. Cannot use NADP(+) as the electron acceptor. This Mus musculus (Mouse) protein is Sorbitol dehydrogenase (Sord).